The following is a 305-amino-acid chain: NADH-cytochrome b5 reductase 1 (305 aa).

The chain crosses the membrane as a helical span at residues 8–28 (VLLASLGVGLLTLLGVALGAY). Positions 44–156 (NEKYQLRLLD…RGPSGLLTYA (113 aa)) constitute an FAD-binding FR-type domain. FAD is bound by residues 136–166 (DSLK…IQPN) and 175–210 (VARN…QCFL).

Belongs to the flavoprotein pyridine nucleotide cytochrome reductase family. The cofactor is FAD.

It is found in the membrane. It catalyses the reaction 2 Fe(III)-[cytochrome b5] + NADH = 2 Fe(II)-[cytochrome b5] + NAD(+) + H(+). Functionally, NADH-cytochrome b5 reductases are involved in desaturation and elongation of fatty acids, cholesterol biosynthesis, drug metabolism, and, in erythrocyte, methemoglobin reduction. The polypeptide is NADH-cytochrome b5 reductase 1 (CYB5R1) (Bos taurus (Bovine)).